The chain runs to 131 residues: Small ribosomal subunit protein uS9 (131 aa).

This sequence belongs to the universal ribosomal protein uS9 family.

The sequence is that of Small ribosomal subunit protein uS9 from Glaesserella parasuis serovar 5 (strain SH0165) (Haemophilus parasuis).